We begin with the raw amino-acid sequence, 202 residues long: Glycerol-3-phosphate acyltransferase (202 aa).

Transmembrane regions (helical) follow at residues 1–21 (MTLI…FGVL), 84–104 (AVAA…FLHF), 116–136 (ILLG…LAVA), and 143–163 (SLAA…FLGF).

Belongs to the PlsY family. Probably interacts with PlsX.

The protein resides in the cell inner membrane. It catalyses the reaction an acyl phosphate + sn-glycerol 3-phosphate = a 1-acyl-sn-glycero-3-phosphate + phosphate. Its pathway is lipid metabolism; phospholipid metabolism. Functionally, catalyzes the transfer of an acyl group from acyl-phosphate (acyl-PO(4)) to glycerol-3-phosphate (G3P) to form lysophosphatidic acid (LPA). This enzyme utilizes acyl-phosphate as fatty acyl donor, but not acyl-CoA or acyl-ACP. In Nitrosospira multiformis (strain ATCC 25196 / NCIMB 11849 / C 71), this protein is Glycerol-3-phosphate acyltransferase.